Here is a 385-residue protein sequence, read N- to C-terminus: S-adenosylmethionine synthase (385 aa).

Histidine 16 contacts ATP. Aspartate 18 is a binding site for Mg(2+). Glutamate 44 provides a ligand contact to K(+). L-methionine-binding residues include glutamate 57 and glutamine 100. The flexible loop stretch occupies residues 100–110 (QSPDINQGVDR). ATP contacts are provided by residues 164 to 166 (DGK), 230 to 231 (KF), aspartate 239, 245 to 246 (RK), alanine 262, and lysine 266. Residue aspartate 239 participates in L-methionine binding. Lysine 270 lines the L-methionine pocket.

The protein belongs to the AdoMet synthase family. Homotetramer; dimer of dimers. The cofactor is Mg(2+). Requires K(+) as cofactor.

It is found in the cytoplasm. The enzyme catalyses L-methionine + ATP + H2O = S-adenosyl-L-methionine + phosphate + diphosphate. It functions in the pathway amino-acid biosynthesis; S-adenosyl-L-methionine biosynthesis; S-adenosyl-L-methionine from L-methionine: step 1/1. Functionally, catalyzes the formation of S-adenosylmethionine (AdoMet) from methionine and ATP. The overall synthetic reaction is composed of two sequential steps, AdoMet formation and the subsequent tripolyphosphate hydrolysis which occurs prior to release of AdoMet from the enzyme. In Helicobacter pylori (strain J99 / ATCC 700824) (Campylobacter pylori J99), this protein is S-adenosylmethionine synthase.